We begin with the raw amino-acid sequence, 176 residues long: Glutathione-regulated potassium-efflux system ancillary protein KefF (176 aa).

FMN contacts are provided by residues histidine 8, 14–17, 65–68, and 105–108; these read SHAN, MQWY, and TTGG.

The protein belongs to the NAD(P)H dehydrogenase (quinone) family. KefF subfamily. As to quaternary structure, homodimer. Interacts with KefC. FMN is required as a cofactor.

The protein localises to the cell inner membrane. The enzyme catalyses a quinone + NADH + H(+) = a quinol + NAD(+). It carries out the reaction a quinone + NADPH + H(+) = a quinol + NADP(+). Regulatory subunit of a potassium efflux system that confers protection against electrophiles. Required for full activity of KefC. Shows redox enzymatic activity, but this enzymatic activity is not required for activation of KefC. This chain is Glutathione-regulated potassium-efflux system ancillary protein KefF, found in Salmonella gallinarum (strain 287/91 / NCTC 13346).